The following is a 309-amino-acid chain: Ecotin-like protein 3 (309 aa).

The tract at residues 140 to 309 (QQELEAPAVS…KSGRDSRRNS (170 aa)) is disordered. The span at 156-167 (VRERQNNPEGHA) shows a compositional bias: basic and acidic residues. Low complexity predominate over residues 168-180 (HPVVVHSVESPEV). The segment covering 181–190 (SGHKDGDQPM) has biased composition (basic and acidic residues). The span at 196–205 (LKQSCSNSSR) shows a compositional bias: low complexity. A compositionally biased stretch (polar residues) spans 209-221 (HSASGSSPKNTPL). The span at 261–279 (SDSTSSRKDDQDSGYEKKV) shows a compositional bias: basic and acidic residues. Over residues 290–299 (SSPKRSASPK) the composition is skewed to low complexity.

Belongs to the protease inhibitor I11 (ecotin) family.

The chain is Ecotin-like protein 3 from Leishmania braziliensis.